The sequence spans 229 residues: Large ribosomal subunit protein uL1 (229 aa).

The protein belongs to the universal ribosomal protein uL1 family. As to quaternary structure, part of the 50S ribosomal subunit.

Binds directly to 23S rRNA. The L1 stalk is quite mobile in the ribosome, and is involved in E site tRNA release. Functionally, protein L1 is also a translational repressor protein, it controls the translation of the L11 operon by binding to its mRNA. This is Large ribosomal subunit protein uL1 from Lacticaseibacillus casei (strain BL23) (Lactobacillus casei).